Consider the following 70-residue polypeptide: DNA-directed RNA polymerase subunit epsilon (70 aa).

It belongs to the RNA polymerase subunit epsilon family. As to quaternary structure, RNAP is composed of a core of 2 alpha, a beta and a beta' subunit. The core is associated with a delta subunit, and at least one of epsilon or omega. When a sigma factor is associated with the core the holoenzyme is formed, which can initiate transcription.

It catalyses the reaction RNA(n) + a ribonucleoside 5'-triphosphate = RNA(n+1) + diphosphate. Functionally, a non-essential component of RNA polymerase (RNAP). This is DNA-directed RNA polymerase subunit epsilon from Bacillus mycoides (strain KBAB4) (Bacillus weihenstephanensis).